We begin with the raw amino-acid sequence, 667 residues long: Putative L-type lectin-domain containing receptor kinase I.4 (667 aa).

The N-terminal stretch at 1 to 21 is a signal peptide; it reads MDCRLHLVLFFSCVCLICLSG. Residues 22–294 lie on the Extracellular side of the membrane; the sequence is QQETGFVYNG…PREEKKKLHP (273 aa). Residues 24–257 are legume-lectin like; the sequence is ETGFVYNGFH…NQYILGWSFS (234 aa). N-linked (GlcNAc...) asparagine glycans are attached at residues asparagine 55, asparagine 110, asparagine 124, asparagine 128, asparagine 181, asparagine 204, and asparagine 225. A helical transmembrane segment spans residues 295 to 315; that stretch reads LLIGLVILLVIPVLMVLGGVY. Residues 316 to 667 are Cytoplasmic-facing; that stretch reads WYRRKKYAEV…THSILEGYGR (352 aa). In terms of domain architecture, Protein kinase spans 350 to 625; sequence FVKDALVGKG…QYLSQKQPLP (276 aa). ATP is bound by residues 356 to 364 and lysine 378; that span reads VGKGGFGKV. The active-site Proton acceptor is aspartate 474.

It in the C-terminal section; belongs to the protein kinase superfamily. Ser/Thr protein kinase family. This sequence in the N-terminal section; belongs to the leguminous lectin family.

The protein resides in the cell membrane. It carries out the reaction L-seryl-[protein] + ATP = O-phospho-L-seryl-[protein] + ADP + H(+). The enzyme catalyses L-threonyl-[protein] + ATP = O-phospho-L-threonyl-[protein] + ADP + H(+). The polypeptide is Putative L-type lectin-domain containing receptor kinase I.4 (LECRK14) (Arabidopsis thaliana (Mouse-ear cress)).